A 59-amino-acid polypeptide reads, in one-letter code: Large ribosomal subunit protein bL32c (59 aa).

A disordered region spans residues 37 to 59 (SRSFSRGNEHPKPKGFSGQQANK).

This sequence belongs to the bacterial ribosomal protein bL32 family.

It is found in the plastid. The protein localises to the chloroplast. In Zea mays (Maize), this protein is Large ribosomal subunit protein bL32c (rpl32).